We begin with the raw amino-acid sequence, 348 residues long: Holliday junction branch migration complex subunit RuvB (348 aa).

The large ATPase domain (RuvB-L) stretch occupies residues 1–184 (MTLNRDMVSP…FGIVQRLEFY (184 aa)). 9 residues coordinate ATP: leucine 23, arginine 24, glycine 65, lysine 68, threonine 69, threonine 70, arginine 174, tyrosine 184, and arginine 221. Threonine 69 lines the Mg(2+) pocket. The interval 185–255 (AVDHLVLIVE…VAQKALDLLD (71 aa)) is small ATPAse domain (RuvB-S). A head domain (RuvB-H) region spans residues 258–348 (SHGFDTMDRK…QEVSDLFPNE (91 aa)). DNA is bound by residues arginine 294, arginine 313, and arginine 318.

Belongs to the RuvB family. In terms of assembly, homohexamer. Forms an RuvA(8)-RuvB(12)-Holliday junction (HJ) complex. HJ DNA is sandwiched between 2 RuvA tetramers; dsDNA enters through RuvA and exits via RuvB. An RuvB hexamer assembles on each DNA strand where it exits the tetramer. Each RuvB hexamer is contacted by two RuvA subunits (via domain III) on 2 adjacent RuvB subunits; this complex drives branch migration. In the full resolvosome a probable DNA-RuvA(4)-RuvB(12)-RuvC(2) complex forms which resolves the HJ.

The protein resides in the cytoplasm. It carries out the reaction ATP + H2O = ADP + phosphate + H(+). The RuvA-RuvB-RuvC complex processes Holliday junction (HJ) DNA during genetic recombination and DNA repair, while the RuvA-RuvB complex plays an important role in the rescue of blocked DNA replication forks via replication fork reversal (RFR). RuvA specifically binds to HJ cruciform DNA, conferring on it an open structure. The RuvB hexamer acts as an ATP-dependent pump, pulling dsDNA into and through the RuvAB complex. RuvB forms 2 homohexamers on either side of HJ DNA bound by 1 or 2 RuvA tetramers; 4 subunits per hexamer contact DNA at a time. Coordinated motions by a converter formed by DNA-disengaged RuvB subunits stimulates ATP hydrolysis and nucleotide exchange. Immobilization of the converter enables RuvB to convert the ATP-contained energy into a lever motion, pulling 2 nucleotides of DNA out of the RuvA tetramer per ATP hydrolyzed, thus driving DNA branch migration. The RuvB motors rotate together with the DNA substrate, which together with the progressing nucleotide cycle form the mechanistic basis for DNA recombination by continuous HJ branch migration. Branch migration allows RuvC to scan DNA until it finds its consensus sequence, where it cleaves and resolves cruciform DNA. This chain is Holliday junction branch migration complex subunit RuvB, found in Nitrosococcus oceani (strain ATCC 19707 / BCRC 17464 / JCM 30415 / NCIMB 11848 / C-107).